The sequence spans 558 residues: Alkaline/neutral invertase CINV2 (558 aa).

A phosphoserine mark is found at Ser16, Ser19, and Ser50. Thr79 carries the post-translational modification Phosphothreonine. Phosphoserine is present on Ser555.

The protein belongs to the glycosyl hydrolase 100 family.

The protein resides in the cytoplasm. It localises to the cytosol. It catalyses the reaction Hydrolysis of terminal non-reducing beta-D-fructofuranoside residues in beta-D-fructofuranosides.. Its function is as follows. Cytosolic invertase that may cleave sucrose into glucose and fructose, and that is involved in the regulation of root growth. May regulate sugar-mediated root development by controlling sucrose catabolism in root cells. In Arabidopsis thaliana (Mouse-ear cress), this protein is Alkaline/neutral invertase CINV2.